Consider the following 540-residue polypeptide: Type II methyltransferase M.AccI (540 aa).

Belongs to the N(4)/N(6)-methyltransferase family. Monomer.

The catalysed reaction is a 2'-deoxyadenosine in DNA + S-adenosyl-L-methionine = an N(6)-methyl-2'-deoxyadenosine in DNA + S-adenosyl-L-homocysteine + H(+). A gamma subtype methylase, recognizes the double-stranded sequence 5'-GTMKAC-3', methylates A-5 on both strands, and protects the DNA from cleavage by the AccI endonuclease. This Acinetobacter calcoaceticus protein is Type II methyltransferase M.AccI (accIM).